The following is a 571-amino-acid chain: Hsp70-Hsp90 organizing protein 2 (571 aa).

TPR repeat units follow at residues 2–35 (ADEAKAKGNAAFSSGDFNSAVNHFTDAINLTPTN), 37–69 (VLFSNRSAAHASLNHYDEALSDAKKTVELKPDW), and 70–103 (GKGYSRLGAAHLGLNQFDEAVEAYSKGLEIDPSN). The disordered stretch occupies residues 117-137 (ASRSRASAPNPFGDAFQGPEM). The 40-residue stretch at 134-173 (GPEMWSKLTADPSTRGLLKQPDFVNMMKEIQRNPSNLNLY) folds into the STI1 1 domain. At Ser-168 the chain carries Phosphoserine. A compositionally biased stretch (acidic residues) spans 198 to 207 (DDMEIGEEEM). The tract at residues 198-245 (DDMEIGEEEMAVPSRKEPEVEKKRKPEPEPEPEPEFGEEKQKKLKAQK) is disordered. Composition is skewed to basic and acidic residues over residues 211 to 225 (SRKEPEVEKKRKPEP) and 234 to 245 (GEEKQKKLKAQK). Positions 240-257 (KLKAQKEKELGNAAYKKK) match the Bipartite nuclear localization signal motif. TPR repeat units follow at residues 243–276 (AQKEKELGNAAYKKKDFETAIQHYSTAMEIDDED), 278–310 (SYITNRAAVHLEMGKYDECIKDCDKAVERGREL), 322–355 (TRKGTALGKMAKVSKDYEPVIQTYQKALTEHRNP), 382–415 (GDEEREKGNDFFKEQKYPDAVRHYTEAIKRNPKD), 417–449 (RAYSNRAACYTKLGAMPEGLKDAEKCIELDPTF), and 450–483 (LKGYSRKGAVQFFMKEYDNAMETYQKGLEHDPNN). The region spanning 520 to 559 (DPEIQNILTDPVMRQVLSDLQENPAAAQKHMQNPMIMNKI) is the STI1 2 domain.

As to quaternary structure, co-chaperone that forms a complex with HSP70 and HSP90 and preproteins (e.g. chloroplast preproteins). Post-translationally, phosphorylated. Acetylated.

Its subcellular location is the cytoplasm. The protein localises to the nucleus. In terms of biological role, mediates the association of the molecular chaperones HSP70 and HSP90. Mediates nuclear encoded chloroplast preproteins binding to HSP90 prior to chloroplastic sorting. The chain is Hsp70-Hsp90 organizing protein 2 (HOP2) from Arabidopsis thaliana (Mouse-ear cress).